A 150-amino-acid polypeptide reads, in one-letter code: 3-dehydroquinate dehydratase (150 aa).

Catalysis depends on Tyr-26, which acts as the Proton acceptor. Substrate-binding residues include Asn-77, His-83, and Asp-90. The Proton donor role is filled by His-103. Substrate-binding positions include Leu-104–Ser-105 and Arg-114.

Belongs to the type-II 3-dehydroquinase family. As to quaternary structure, homododecamer.

The catalysed reaction is 3-dehydroquinate = 3-dehydroshikimate + H2O. Its pathway is metabolic intermediate biosynthesis; chorismate biosynthesis; chorismate from D-erythrose 4-phosphate and phosphoenolpyruvate: step 3/7. Its function is as follows. Catalyzes a trans-dehydration via an enolate intermediate. The polypeptide is 3-dehydroquinate dehydratase (Klebsiella pneumoniae (strain 342)).